The primary structure comprises 121 residues: Basic phospholipase A2 homolog BaTX (121 aa).

Disulfide bonds link Cys26-Cys115, Cys28-Cys44, Cys43-Cys95, Cys49-Cys121, Cys50-Cys88, Cys57-Cys81, and Cys75-Cys86. Residues 105–117 (KKYRYYLKPLCKK) are important for membrane-damaging activities in eukaryotes and bacteria; heparin-binding.

The protein belongs to the phospholipase A2 family. Group II subfamily. K49 sub-subfamily. In terms of assembly, homodimer; non-covalently linked. In terms of tissue distribution, expressed by the venom gland.

The protein resides in the secreted. Its function is as follows. Snake venom phospholipase A2 homolog that lacks enzymatic activity. Is myotoxic and displays edema-inducing activities. In vitro, produced time-dependent, irreversible neuromuscular blockade in isolated mouse phrenic nerve-diaphragm and chick biventer cervicis preparations. A model of myotoxic mechanism has been proposed: an apo Lys49-PLA2 is activated by the entrance of a hydrophobic molecule (e.g. fatty acid) at the hydrophobic channel of the protein leading to a reorientation of a monomer. This reorientation causes a transition between 'inactive' to 'active' states, causing alignment of C-terminal and membrane-docking sites (MDoS) side-by-side and putting the membrane-disruption sites (MDiS) in the same plane, exposed to solvent and in a symmetric position for both monomers. The MDoS region stabilizes the toxin on membrane by the interaction of charged residues with phospholipid head groups. Subsequently, the MDiS region destabilizes the membrane with penetration of hydrophobic residues. This insertion causes a disorganization of the membrane, allowing an uncontrolled influx of ions (i.e. calcium and sodium), and eventually triggering irreversible intracellular alterations and cell death. The protein is Basic phospholipase A2 homolog BaTX of Bothrops alternatus (Urutu).